An 88-amino-acid chain; its full sequence is Small ribosomal subunit protein uS15 (88 aa).

This sequence belongs to the universal ribosomal protein uS15 family. As to quaternary structure, part of the 30S ribosomal subunit. Forms a bridge to the 50S subunit in the 70S ribosome, contacting the 23S rRNA.

One of the primary rRNA binding proteins, it binds directly to 16S rRNA where it helps nucleate assembly of the platform of the 30S subunit by binding and bridging several RNA helices of the 16S rRNA. In terms of biological role, forms an intersubunit bridge (bridge B4) with the 23S rRNA of the 50S subunit in the ribosome. The sequence is that of Small ribosomal subunit protein uS15 from Geobacter sulfurreducens (strain ATCC 51573 / DSM 12127 / PCA).